A 397-amino-acid chain; its full sequence is Fractalkine (397 aa).

The N-terminal stretch at 1–24 (MAPISLSWLLRLATFCHLTVLLAG) is a signal peptide. A chemokine and involved in interaction with ITGAV:ITGB3 and ITGA4:ITGB1 region spans residues 25–100 (QHHGVTKCNI…RQAAALTRNG (76 aa)). Residues 25–341 (QHHGVTKCNI…PDAQAATRRQ (317 aa)) are Extracellular-facing. Intrachain disulfides connect Cys-32/Cys-58 and Cys-36/Cys-74. An N-linked (GlcNAc...) asparagine glycan is attached at Asn-33. Residues 101 to 341 (GTFEKQIGEV…PDAQAATRRQ (241 aa)) form a mucin-like stalk region. Disordered regions lie at residues 128–265 (EPEA…REEM) and 289–309 (VPVSSEGTPSREPVASGSWTP). The span at 133-147 (GESSSLEPTPSSQEA) shows a compositional bias: polar residues. Residue Thr-183 is glycosylated (O-linked (GalNAc...) threonine). The segment covering 193–202 (TAATWQSSAP) has biased composition (polar residues). Over residues 219-243 (PSTQDPSTQASTASSPAPEENAPSE) the composition is skewed to low complexity. An O-linked (GalNAc...) serine glycan is attached at Ser-253. An O-linked (GalNAc...) threonine glycan is attached at Thr-329. A helical transmembrane segment spans residues 342–362 (AVGLLAFLGLLFCLGVAMFTY). Residues 363-397 (QSLQGCPRKMAGEMAEGLRYIPRSCGSNSYVLVPV) lie on the Cytoplasmic side of the membrane.

It belongs to the intercrine delta family. In terms of assembly, monomer. Forms a ternary complex with CX3CR1 and ITGAV:ITGB3 or ITGA4:ITGB1. As to quaternary structure, (Microbial infection) Interacts with pox virus crmD; this inhibits cell migration mediated by CX3CL1. (Microbial infection) Interacts (via N-terminus) with human cytomegalovirus (HHV-5) US28. In terms of assembly, (Microbial infection) Interacts with P.falciparum (strain 3D7) CBP1 and CBP2 (via their extracellular domains); the interaction mediates the adhesion of infected erythrocytes with endothelial cells. Post-translationally, a soluble short 95 kDa form may be released by proteolytic cleavage from the long membrane-anchored form. O-glycosylated with core 1 or possibly core 8 glycans. As to expression, expressed in the seminal plasma, endometrial fluid and follicular fluid (at protein level). Small intestine, colon, testis, prostate, heart, brain, lung, skeletal muscle, kidney and pancreas. Most abundant in the brain and heart.

The protein localises to the cell membrane. It is found in the secreted. In terms of biological role, chemokine that acts as a ligand for both CX3CR1 and integrins ITGAV:ITGB3 and ITGA4:ITGB1. The CX3CR1-CX3CL1 signaling exerts distinct functions in different tissue compartments, such as immune response, inflammation, cell adhesion and chemotaxis. Regulates leukocyte adhesion and migration processes at the endothelium. Can activate integrins in both a CX3CR1-dependent and CX3CR1-independent manner. In the presence of CX3CR1, activates integrins by binding to the classical ligand-binding site (site 1) in integrins. In the absence of CX3CR1, binds to a second site (site 2) in integrins which is distinct from site 1 and enhances the binding of other integrin ligands to site 1. Functionally, the soluble form is chemotactic for T-cells and monocytes, but not for neutrophils. Its function is as follows. The membrane-bound form promotes adhesion of those leukocytes to endothelial cells. (Microbial infection) Mediates the cytoadherence of erythrocytes infected with parasite P.falciparum (strain 3D7) with endothelial cells by interacting with P.falciparum CBP1 and CBP2 expressed at the surface of erythrocytes. The adhesion prevents the elimination of infected erythrocytes by the spleen. The protein is Fractalkine of Homo sapiens (Human).